We begin with the raw amino-acid sequence, 485 residues long: tRNA sulfurtransferase (485 aa).

A THUMP domain is found at E63–R167. Residues L185 to I186, K267, G289, and Q298 contribute to the ATP site. C346 and C458 are joined by a disulfide. The Rhodanese domain maps to V406 to P484. C458 functions as the Cysteine persulfide intermediate in the catalytic mechanism.

This sequence belongs to the ThiI family.

The protein resides in the cytoplasm. It carries out the reaction [ThiI sulfur-carrier protein]-S-sulfanyl-L-cysteine + a uridine in tRNA + 2 reduced [2Fe-2S]-[ferredoxin] + ATP + H(+) = [ThiI sulfur-carrier protein]-L-cysteine + a 4-thiouridine in tRNA + 2 oxidized [2Fe-2S]-[ferredoxin] + AMP + diphosphate. It catalyses the reaction [ThiS sulfur-carrier protein]-C-terminal Gly-Gly-AMP + S-sulfanyl-L-cysteinyl-[cysteine desulfurase] + AH2 = [ThiS sulfur-carrier protein]-C-terminal-Gly-aminoethanethioate + L-cysteinyl-[cysteine desulfurase] + A + AMP + 2 H(+). It participates in cofactor biosynthesis; thiamine diphosphate biosynthesis. Catalyzes the ATP-dependent transfer of a sulfur to tRNA to produce 4-thiouridine in position 8 of tRNAs, which functions as a near-UV photosensor. Also catalyzes the transfer of sulfur to the sulfur carrier protein ThiS, forming ThiS-thiocarboxylate. This is a step in the synthesis of thiazole, in the thiamine biosynthesis pathway. The sulfur is donated as persulfide by IscS. This Shewanella loihica (strain ATCC BAA-1088 / PV-4) protein is tRNA sulfurtransferase.